The primary structure comprises 368 residues: Trans-enoyl reductase TwmE (368 aa).

49 to 52 contributes to the NADP(+) binding site; the sequence is SDYK. 135-142 contributes to the substrate binding site; that stretch reads FKAATLGT. NADP(+) is bound by residues 204–207, Tyr222, and 269–270; these read SPRS and LE. Residue 290–294 participates in substrate binding; sequence SAELY. 360–361 provides a ligand contact to NADP(+); it reads HP.

The protein belongs to the zinc-containing alcohol dehydrogenase family. Monomer.

It functions in the pathway secondary metabolite biosynthesis. Its function is as follows. Trans-enoyl reductase; part of the gene cluster that mediates the biosynthesis of wortmanamides A and B, reduced long-chain polyketides amidated with a specific omega-amino acid, 5-aminopentanoic acid (5PA). The PKS modules of TwmB are involved in the synthesis of the polyketide backbone, whereas the non-canonical C domain of TwmB is a bonafide condensation domain that specifically selects 5PA and catalyzes amidation to release polyketide chain. The C domain clearly prefers C16 and C18 fatty acyl substrates, which is consistent with simultaneous formation of both octaketide and nonaketide acyl amides wortmanamides A and B. Because TwmB lacks a designated enoylreductase (ER) domain, the required activity is provided the enoyl reductase TwmE. The roles of the remaining enzymes have still to be clarified. This chain is Trans-enoyl reductase TwmE, found in Talaromyces wortmannii (Penicillium wortmannii).